The primary structure comprises 165 residues: Nucleotide-binding protein Chy400_2003 (165 aa).

This sequence belongs to the YajQ family.

Functionally, nucleotide-binding protein. The polypeptide is Nucleotide-binding protein Chy400_2003 (Chloroflexus aurantiacus (strain ATCC 29364 / DSM 637 / Y-400-fl)).